Here is a 219-residue protein sequence, read N- to C-terminus: Phosphoribosylformylglycinamidine synthase subunit PurQ (219 aa).

Positions 2–219 (KIAVITFPGS…KVVLDLILGS (218 aa)) constitute a Glutamine amidotransferase type-1 domain. Cys86 serves as the catalytic Nucleophile. Active-site residues include His195 and Glu197.

As to quaternary structure, part of the FGAM synthase complex composed of 1 PurL, 1 PurQ and 2 PurS subunits.

It is found in the cytoplasm. It carries out the reaction N(2)-formyl-N(1)-(5-phospho-beta-D-ribosyl)glycinamide + L-glutamine + ATP + H2O = 2-formamido-N(1)-(5-O-phospho-beta-D-ribosyl)acetamidine + L-glutamate + ADP + phosphate + H(+). It catalyses the reaction L-glutamine + H2O = L-glutamate + NH4(+). It participates in purine metabolism; IMP biosynthesis via de novo pathway; 5-amino-1-(5-phospho-D-ribosyl)imidazole from N(2)-formyl-N(1)-(5-phospho-D-ribosyl)glycinamide: step 1/2. In terms of biological role, part of the phosphoribosylformylglycinamidine synthase complex involved in the purines biosynthetic pathway. Catalyzes the ATP-dependent conversion of formylglycinamide ribonucleotide (FGAR) and glutamine to yield formylglycinamidine ribonucleotide (FGAM) and glutamate. The FGAM synthase complex is composed of three subunits. PurQ produces an ammonia molecule by converting glutamine to glutamate. PurL transfers the ammonia molecule to FGAR to form FGAM in an ATP-dependent manner. PurS interacts with PurQ and PurL and is thought to assist in the transfer of the ammonia molecule from PurQ to PurL. The protein is Phosphoribosylformylglycinamidine synthase subunit PurQ of Leptospira interrogans serogroup Icterohaemorrhagiae serovar copenhageni (strain Fiocruz L1-130).